We begin with the raw amino-acid sequence, 447 residues long: Phosphoglucosamine mutase (447 aa).

The active-site Phosphoserine intermediate is the Ser101. The Mg(2+) site is built by Ser101, Asp242, Asp244, and Asp246. At Ser101 the chain carries Phosphoserine.

This sequence belongs to the phosphohexose mutase family. Requires Mg(2+) as cofactor. In terms of processing, activated by phosphorylation.

The enzyme catalyses alpha-D-glucosamine 1-phosphate = D-glucosamine 6-phosphate. Functionally, catalyzes the conversion of glucosamine-6-phosphate to glucosamine-1-phosphate. The protein is Phosphoglucosamine mutase of Xanthobacter autotrophicus (strain ATCC BAA-1158 / Py2).